The sequence spans 537 residues: Chaperonin GroEL (537 aa).

ATP contacts are provided by residues T31–P34, D87–T91, G415, and D495.

Belongs to the chaperonin (HSP60) family. Forms a cylinder of 14 subunits composed of two heptameric rings stacked back-to-back. Interacts with the co-chaperonin GroES.

It localises to the cytoplasm. The catalysed reaction is ATP + H2O + a folded polypeptide = ADP + phosphate + an unfolded polypeptide.. Its function is as follows. Together with its co-chaperonin GroES, plays an essential role in assisting protein folding. The GroEL-GroES system forms a nano-cage that allows encapsulation of the non-native substrate proteins and provides a physical environment optimized to promote and accelerate protein folding. The polypeptide is Chaperonin GroEL (Methanoregula boonei (strain DSM 21154 / JCM 14090 / 6A8)).